Reading from the N-terminus, the 268-residue chain is Large ribosomal subunit protein uL3 (268 aa).

At Gln-156 the chain carries N5-methylglutamine. Low complexity predominate over residues 242–259 (VENEAAPADADNAAPEAA). The disordered stretch occupies residues 242-268 (VENEAAPADADNAAPEAAADGEEGTQA).

This sequence belongs to the universal ribosomal protein uL3 family. As to quaternary structure, part of the 50S ribosomal subunit. Forms a cluster with proteins L14 and L19. Methylated by PrmB.

Functionally, one of the primary rRNA binding proteins, it binds directly near the 3'-end of the 23S rRNA, where it nucleates assembly of the 50S subunit. This chain is Large ribosomal subunit protein uL3, found in Maricaulis maris (strain MCS10) (Caulobacter maris).